The following is a 459-amino-acid chain: Cysteine--tRNA ligase (459 aa).

Zn(2+) is bound at residue C27. The 'HIGH' region signature appears at I29 to H39. Positions 208, 233, and 237 each coordinate Zn(2+). A 'KMSKS' region motif is present at residues K265–S269. K268 is a binding site for ATP.

The protein belongs to the class-I aminoacyl-tRNA synthetase family. In terms of assembly, monomer. Zn(2+) serves as cofactor.

It is found in the cytoplasm. It carries out the reaction tRNA(Cys) + L-cysteine + ATP = L-cysteinyl-tRNA(Cys) + AMP + diphosphate. The chain is Cysteine--tRNA ligase from Francisella philomiragia subsp. philomiragia (strain ATCC 25017 / CCUG 19701 / FSC 153 / O#319-036).